Here is a 108-residue protein sequence, read N- to C-terminus: MQITDVLIKPILTEKTYGIMMSEPRKYTFLVNAKANKNYIKQAFKAIYGVTPIAVNTKIKKPARVRTGTQNPGYSRLEKIAIITVPFGVEVAITGEKPEPKEESSSKK.

Belongs to the universal ribosomal protein uL23 family. In terms of assembly, part of the 50S ribosomal subunit. Contacts protein L29, and trigger factor when it is bound to the ribosome.

Functionally, one of the early assembly proteins it binds 23S rRNA. One of the proteins that surrounds the polypeptide exit tunnel on the outside of the ribosome. Forms the main docking site for trigger factor binding to the ribosome. This Mycoplasmoides gallisepticum (strain R(low / passage 15 / clone 2)) (Mycoplasma gallisepticum) protein is Large ribosomal subunit protein uL23.